The chain runs to 264 residues: Probable metallo-hydrolase YflN (264 aa).

Zn(2+) contacts are provided by His80, His82, Asp84, His85, His169, Asp188, and His241.

The protein belongs to the metallo-beta-lactamase superfamily. The cofactor is Zn(2+).

This is Probable metallo-hydrolase YflN (yflN) from Bacillus subtilis (strain 168).